The sequence spans 271 residues: Insulin-like growth factor-binding protein 5 (271 aa).

A signal peptide spans 1 to 19 (MVLTAVLLLLAACAGSAQG). Positions 22 to 102 (SFVHCEPCDE…LHGRGVCLNE (81 aa)) constitute an IGFBP N-terminal domain. Cystine bridges form between cysteine 26/cysteine 52, cysteine 29/cysteine 54, cysteine 37/cysteine 55, cysteine 44/cysteine 58, cysteine 66/cysteine 79, and cysteine 73/cysteine 99. Positions 109–121 (AKIERDSREHEEP) are enriched in basic and acidic residues. The tract at residues 109–129 (AKIERDSREHEEPTTSEMAEE) is disordered. Serine 115 is modified (phosphoserine). The Thyroglobulin type-1 domain occupies 188–262 (QGPCRRHMEA…MEYVDGDFQC (75 aa)). Intrachain disulfides connect cysteine 191-cysteine 218, cysteine 229-cysteine 240, and cysteine 242-cysteine 262.

As to quaternary structure, interacts with IGF1; this interaction enhances the growth stimulatory effects of IGF1 on fibroblasts. Interacts with CAV1; this interaction allows trafficking of IGFBP5 from the plasma membrane to the nucleus. Interacts with NCL; this interaction is necessary for IGFBP5 localization to the nucleus.

The protein localises to the secreted. It is found in the cytoplasm. The protein resides in the nucleus. In terms of biological role, multifunctional protein that plays a critical role in regulating the availability of IGFs to their receptors and thereby regulates IGF-mediated cellular processes including proliferation, differentiation, and apoptosis in a cell-type specific manner. Increases the cell proliferation of osteoblasts, intestinal smooth muscle cells and neuroblastoma cells. Enhances adhesion and survival of epithelial cells but decreases adhesion of mesenchymal cells. Once secreted, acts as a major mediator of mTORC1-dependent feedback inhibition of IGF1 signaling. Also plays a role in the induction of extracellular matrix (ECM) production and deposition independently of its nuclear translocation and binding to IGFs. Acts itself as a growth factor that can act independently of IGFs to regulate bone formation. Acts as a ligand for the ROR1 receptor which triggers formation of ROR1/HER2 heterodimer to enhance CREB oncogenic signaling. This is Insulin-like growth factor-binding protein 5 (IGFBP5) from Bos taurus (Bovine).